Consider the following 179-residue polypeptide: NAD(P)H-quinone oxidoreductase subunit I, chloroplastic (179 aa).

4Fe-4S ferredoxin-type domains lie at 55-84 (GRIH…VDWR) and 95-124 (LNYS…MTEE). [4Fe-4S] cluster contacts are provided by cysteine 64, cysteine 67, cysteine 70, cysteine 74, cysteine 104, cysteine 107, cysteine 110, and cysteine 114.

The protein belongs to the complex I 23 kDa subunit family. NDH is composed of at least 16 different subunits, 5 of which are encoded in the nucleus. The cofactor is [4Fe-4S] cluster.

It localises to the plastid. It is found in the chloroplast thylakoid membrane. The catalysed reaction is a plastoquinone + NADH + (n+1) H(+)(in) = a plastoquinol + NAD(+) + n H(+)(out). It carries out the reaction a plastoquinone + NADPH + (n+1) H(+)(in) = a plastoquinol + NADP(+) + n H(+)(out). Functionally, NDH shuttles electrons from NAD(P)H:plastoquinone, via FMN and iron-sulfur (Fe-S) centers, to quinones in the photosynthetic chain and possibly in a chloroplast respiratory chain. The immediate electron acceptor for the enzyme in this species is believed to be plastoquinone. Couples the redox reaction to proton translocation, and thus conserves the redox energy in a proton gradient. The chain is NAD(P)H-quinone oxidoreductase subunit I, chloroplastic from Acorus calamus (Sweet flag).